The chain runs to 886 residues: MDKNFYKNSLNIFNSNFSMKANLSEKDKFYADFWEKNQIYQQILRKRRGNPRFILHDGPPYANGDIHIGHALNKILKDIIVRYKTMAGFYSPFVPGWDTHGLPIENKIINQIGSKSTLEIRRKSNDFANSQILAQMKQFKKLNLLTDFKQIYQTNTPNYEAKQLKLFKKMVSRGLVYRALKPVYWSPSSQSALAEAEIEYLEYRSPSLFTSFDIKKGNNFVAENDKLIIWTTTPWTLIANSGVAVGENFDYVRIKNGENFYVLAANLLEKLAVIFDWKHYEIIDNFPGKSILGIKYLHPIFEKICPIVSGNHVSLDVGSGLVHLAPLFGEDDYWIGRENNLEMVMHVNDDGKFNENAGQFSGQFYADSNKLITEFLEKKSKILHLSFIDHSFPHDWRTLKPVIYRGTPQWFVSIEKIKKDLEKAIEEIEFPENWLKKRLTKMVVERKDWLISRQRSWGIPLIIFYDQNKEPVLDKPEIFDYIISLVEKFGSRIWYEKTTDELLPEKYQNLGWTKENDILDVWFDSGVSFFAANISDEKPPFDIYFEGSDQYRGWFNSSLINSVIYFGFSPYKKLLSHGFVVDAKGNKMSKSRGNGVDPLVILSKYGCDIFRLWVANSEYYNDIVYSEAIFEQNVEIYRKIRNTVRFLITNLADFKPKKYELTEVDLYIFNKIQKLKNEIIQNYDQNRFVRVVKIINNFIIEFSNFYLSIVKDILYADKEESLKRRQVQYNLYELLQVLNIAIAPIMPTTAEEIYSFIQKNNKQISVHMEEFFKKSHFDEELDAKWDEFFQIKDSVYQLIEQKIKSKEIKRPNEVGVLLKTDSDFIKSIDLEKLLMVAKVEFSNEKTEILQLNWEKCPRCWNHFEKINKVCARCFEVLNEIVPEKNS.

The 'HIGH' region signature appears at 60-70 (PYANGDIHIGH). Position 546 (Glu-546) interacts with L-isoleucyl-5'-AMP. Positions 587–591 (KMSKS) match the 'KMSKS' region motif. Lys-590 is a binding site for ATP. Zn(2+) contacts are provided by Cys-856, Cys-859, Cys-870, and Cys-873.

This sequence belongs to the class-I aminoacyl-tRNA synthetase family. IleS type 1 subfamily. As to quaternary structure, monomer. It depends on Zn(2+) as a cofactor.

It is found in the cytoplasm. It catalyses the reaction tRNA(Ile) + L-isoleucine + ATP = L-isoleucyl-tRNA(Ile) + AMP + diphosphate. Catalyzes the attachment of isoleucine to tRNA(Ile). As IleRS can inadvertently accommodate and process structurally similar amino acids such as valine, to avoid such errors it has two additional distinct tRNA(Ile)-dependent editing activities. One activity is designated as 'pretransfer' editing and involves the hydrolysis of activated Val-AMP. The other activity is designated 'posttransfer' editing and involves deacylation of mischarged Val-tRNA(Ile). The polypeptide is Isoleucine--tRNA ligase (Mesomycoplasma hyopneumoniae (strain 232) (Mycoplasma hyopneumoniae)).